Reading from the N-terminus, the 502-residue chain is ATP synthase subunit alpha (502 aa).

169–176 (GDRQTGKT) provides a ligand contact to ATP.

This sequence belongs to the ATPase alpha/beta chains family. F-type ATPases have 2 components, CF(1) - the catalytic core - and CF(0) - the membrane proton channel. CF(1) has five subunits: alpha(3), beta(3), gamma(1), delta(1), epsilon(1). CF(0) has three main subunits: a(1), b(2) and c(9-12). The alpha and beta chains form an alternating ring which encloses part of the gamma chain. CF(1) is attached to CF(0) by a central stalk formed by the gamma and epsilon chains, while a peripheral stalk is formed by the delta and b chains.

It is found in the cell membrane. It catalyses the reaction ATP + H2O + 4 H(+)(in) = ADP + phosphate + 5 H(+)(out). Functionally, produces ATP from ADP in the presence of a proton gradient across the membrane. The alpha chain is a regulatory subunit. The chain is ATP synthase subunit alpha from Desulfitobacterium hafniense (strain DSM 10664 / DCB-2).